Here is a 104-residue protein sequence, read N- to C-terminus: DNA-directed RNA polymerase subunit omega (104 aa).

This sequence belongs to the RNA polymerase subunit omega family. The RNAP catalytic core consists of 2 alpha, 1 beta, 1 beta' and 1 omega subunit. When a sigma factor is associated with the core the holoenzyme is formed, which can initiate transcription.

The catalysed reaction is RNA(n) + a ribonucleoside 5'-triphosphate = RNA(n+1) + diphosphate. Functionally, promotes RNA polymerase assembly. Latches the N- and C-terminal regions of the beta' subunit thereby facilitating its interaction with the beta and alpha subunits. The chain is DNA-directed RNA polymerase subunit omega from Streptococcus thermophilus (strain CNRZ 1066).